The chain runs to 146 residues: Large ribosomal subunit protein uL15 (146 aa).

Residues 1–58 (MNLSNLRAPKKANRNRKRVGRGMGSGHGKTSTRGHKGQRSRSGSRSMRGFEGGQMPLH) form a disordered region. 2 stretches are compositionally biased toward basic residues: residues 8-20 (APKK…KRVG) and 30-39 (TSTRGHKGQR). Positions 40–49 (SRSGSRSMRG) are enriched in low complexity.

Belongs to the universal ribosomal protein uL15 family. As to quaternary structure, part of the 50S ribosomal subunit.

Functionally, binds to the 23S rRNA. This chain is Large ribosomal subunit protein uL15, found in Acidobacterium capsulatum (strain ATCC 51196 / DSM 11244 / BCRC 80197 / JCM 7670 / NBRC 15755 / NCIMB 13165 / 161).